Reading from the N-terminus, the 190-residue chain is E3 ubiquitin-protein ligase RNF183 (190 aa).

At 1–159 the chain is on the cytoplasmic side; that stretch reads MSEPQGQELR…RECVRNPHFR (159 aa). The RING-type zinc finger occupies 13-60; it reads CPVCWNPFNNTFHTPKVLDCCHSFCVECLAHLSLVTPARRRLLCPLCR. The chain crosses the membrane as a helical; Anchor for type IV membrane protein span at residues 160 to 180; that stretch reads IFAYLMAVILSVTLLLIFSIF. Residues 181-190 are Lumenal-facing; the sequence is WTKQFFWGMG.

In terms of assembly, interacts with FATE1. Interacts with SEC16A. Interacts with BCL2L1. Autoubiquitinated (in vitro). As to expression, highly expressed in the kidney and testis.

It localises to the endoplasmic reticulum membrane. The protein resides in the endoplasmic reticulum. It is found in the golgi apparatus. Its subcellular location is the cis-Golgi network membrane. The protein localises to the lysosome membrane. The catalysed reaction is S-ubiquitinyl-[E2 ubiquitin-conjugating enzyme]-L-cysteine + [acceptor protein]-L-lysine = [E2 ubiquitin-conjugating enzyme]-L-cysteine + N(6)-ubiquitinyl-[acceptor protein]-L-lysine.. The protein operates within protein modification; protein ubiquitination. Its function is as follows. Acts as an E3 ubiquitin ligase catalyzing the covalent attachment of ubiquitin moieties onto substrate proteins. Triggers apoptosis in response to prolonged ER stress by mediating the polyubiquitination and subsequent proteasomal degradation of BCL2L1. May collaborate with FATE1 to restrain BIK protein levels thus regulating apoptotic signaling. The polypeptide is E3 ubiquitin-protein ligase RNF183 (Rnf183) (Mus musculus (Mouse)).